Here is a 210-residue protein sequence, read N- to C-terminus: Thymidylate kinase (210 aa).

Residue 10 to 17 (GPEGAGKS) participates in ATP binding.

Belongs to the thymidylate kinase family.

The catalysed reaction is dTMP + ATP = dTDP + ADP. In terms of biological role, phosphorylation of dTMP to form dTDP in both de novo and salvage pathways of dTTP synthesis. The polypeptide is Thymidylate kinase (Pseudomonas putida (strain ATCC 700007 / DSM 6899 / JCM 31910 / BCRC 17059 / LMG 24140 / F1)).